A 179-amino-acid polypeptide reads, in one-letter code: NADH-quinone oxidoreductase subunit B (179 aa).

Cys-35, Cys-36, Cys-100, and Cys-129 together coordinate [4Fe-4S] cluster.

This sequence belongs to the complex I 20 kDa subunit family. In terms of assembly, NDH-1 is composed of 14 different subunits. Subunits NuoB, C, D, E, F, and G constitute the peripheral sector of the complex. [4Fe-4S] cluster serves as cofactor.

The protein resides in the cell inner membrane. It carries out the reaction a quinone + NADH + 5 H(+)(in) = a quinol + NAD(+) + 4 H(+)(out). NDH-1 shuttles electrons from NADH, via FMN and iron-sulfur (Fe-S) centers, to quinones in the respiratory chain. Couples the redox reaction to proton translocation (for every two electrons transferred, four hydrogen ions are translocated across the cytoplasmic membrane), and thus conserves the redox energy in a proton gradient. The sequence is that of NADH-quinone oxidoreductase subunit B from Aquifex aeolicus (strain VF5).